A 316-amino-acid chain; its full sequence is Transaldolase (316 aa).

The Schiff-base intermediate with substrate role is filled by lysine 132.

Belongs to the transaldolase family. Type 1 subfamily. As to quaternary structure, homodimer.

The protein resides in the cytoplasm. The catalysed reaction is D-sedoheptulose 7-phosphate + D-glyceraldehyde 3-phosphate = D-erythrose 4-phosphate + beta-D-fructose 6-phosphate. It participates in carbohydrate degradation; pentose phosphate pathway; D-glyceraldehyde 3-phosphate and beta-D-fructose 6-phosphate from D-ribose 5-phosphate and D-xylulose 5-phosphate (non-oxidative stage): step 2/3. Functionally, transaldolase is important for the balance of metabolites in the pentose-phosphate pathway. This chain is Transaldolase, found in Vibrio campbellii (strain ATCC BAA-1116).